A 326-amino-acid polypeptide reads, in one-letter code: Beta-1,3-galactosyltransferase 1 (326 aa).

The Cytoplasmic portion of the chain corresponds to 1–6; that stretch reads MASKVS. The helical; Signal-anchor for type II membrane protein transmembrane segment at 7-26 threads the bilayer; the sequence is CLYVLTVVCWASALWYLSIT. The Lumenal segment spans residues 27–326; the sequence is RPTSSYTGSK…DMSSKKHLRC (300 aa). Residues asparagine 47 and asparagine 151 are each glycosylated (N-linked (GlcNAc...) asparagine).

This sequence belongs to the glycosyltransferase 31 family. Requires Mn(2+) as cofactor.

It is found in the golgi apparatus membrane. The catalysed reaction is an N-acetyl-beta-D-glucosaminyl derivative + UDP-alpha-D-galactose = a beta-D-galactosyl-(1-&gt;3)-N-acetyl-beta-D-glucosaminyl derivative + UDP + H(+). The enzyme catalyses a beta-D-GlcNAc-(1-&gt;3)-beta-D-Gal-(1-&gt;4)-beta-D-Glc-(1&lt;-&gt;1)-Cer(d18:1(4E)) + UDP-alpha-D-galactose = a beta-D-Gal-(1-&gt;3)-beta-D-GlcNAc-(1-&gt;3)-beta-D-Gal-(1-&gt;4)-beta-D-Glc-(1&lt;-&gt;1')-Cer(d18:1(4E)) + UDP + H(+). Its pathway is protein modification; protein glycosylation. In terms of biological role, beta-1,3-galactosyltransferase that transfers galactose from UDP-galactose to substrates with a terminal beta-N-acetylglucosamine (beta-GlcNAc) residue. Involved in the biosynthesis of the carbohydrate moieties of glycolipids and glycoproteins. This is Beta-1,3-galactosyltransferase 1 (B3GALT1) from Gorilla gorilla gorilla (Western lowland gorilla).